A 161-amino-acid chain; its full sequence is Lipid droplet assembly factor 1 (161 aa).

Topologically, residues 1-43 are cytoplasmic; it reads MAKEEPQSISRDLQELQKKLSLLIDSFQNNSKVVAFMKSPVGQ. Residues 44-61 traverse the membrane as a helical segment; sequence YLDSHPFLAFTLLVFIVM. Topologically, residues 62–67 are lumenal; it reads SAVPVG. The chain crosses the membrane as a helical span at residues 68-87; sequence FFLLIVVLTTLAALLGVIIL. Residues 88–93 are Cytoplasmic-facing; the sequence is EGLVIS. A helical transmembrane segment spans residues 94 to 110; sequence VGGFSLLCILCGLGFVS. The Lumenal segment spans residues 111–116; that stretch reads LAMSGM. Residues 117-133 traverse the membrane as a helical segment; it reads MIASYVVVSSLISCWFS. Residues 134-161 lie on the Cytoplasmic side of the membrane; it reads PRPLTQQNTSCDFLPAMKSAEFEGLYQE.

Belongs to the LDAF1 family. Interacts with isoform 1 and isoform 3 of BSCL2/seipin to form an oligomeric complex. In terms of tissue distribution, expressed at high levels in the heart and skeletal muscle. Expressed at low levels in kidney, small intestine, lung and liver.

It localises to the endoplasmic reticulum membrane. Its subcellular location is the lipid droplet. In terms of biological role, plays an important role in the formation of lipid droplets (LD) which are storage organelles at the center of lipid and energy homeostasis. In association with BSCL2/seipin, defines the sites of LD formation in the endoplasmic reticulum. The protein is Lipid droplet assembly factor 1 of Homo sapiens (Human).